A 158-amino-acid polypeptide reads, in one-letter code: Eukaryotic translation initiation factor 5A (158 aa).

Hypusine is present on Lys-51.

This sequence belongs to the eIF-5A family. In terms of processing, lys-51 undergoes hypusination, a unique post-translational modification that consists in the addition of a butylamino group from spermidine to lysine side chain, leading to the formation of the unusual amino acid hypusine. eIF-5As are the only known proteins to undergo this modification, which is essential for their function.

The protein localises to the cytoplasm. In terms of biological role, translation factor that promotes translation elongation and termination, particularly upon ribosome stalling at specific amino acid sequence contexts. Binds between the exit (E) and peptidyl (P) site of the ribosome and promotes rescue of stalled ribosome: specifically required for efficient translation of polyproline-containing peptides as well as other motifs that stall the ribosome. Acts as a ribosome quality control (RQC) cofactor by joining the RQC complex to facilitate peptidyl transfer during CAT tailing step. The polypeptide is Eukaryotic translation initiation factor 5A (ANB1) (Candida albicans (strain SC5314 / ATCC MYA-2876) (Yeast)).